A 724-amino-acid chain; its full sequence is Probable metal-nicotianamine transporter YSL8 (724 aa).

Residues 1–58 (MRKGGLTPDRDRQIEEHELQETGISPDIERLKRNINATPYQREEEEEDREEQEESVEG) are disordered. Basic and acidic residues predominate over residues 8 to 20 (PDRDRQIEEHELQ). Ser-25 is modified (phosphoserine). Residues 43–56 (EEEEEDREEQEESV) are compositionally biased toward acidic residues. Helical transmembrane passes span 72–92 (LTIR…FIVM), 96–116 (LTTG…FFFV), 144–164 (CVVA…LFAM), 184–204 (LGWM…SVVP), 245–265 (VLGK…FFTA), 304–324 (IINI…WPLI), and 349–369 (VFIA…KVLI). The disordered stretch occupies residues 386–407 (RSSLAHKEDPPASPASPLTPRI). Transmembrane regions (helical) follow at residues 423 to 443 (IPSW…TAIL), 455 to 475 (IIVI…GAGL), 478 to 497 (WSLA…AWAG), 501 to 520 (GGLL…VSTA), 541 to 561 (FVSQ…VFWL), 603 to 623 (LMLC…KDCL), 641 to 661 (FFLG…LFVW), and 679 to 699 (GLIC…IAGV).

It belongs to the YSL (TC 2.A.67.2) family.

It localises to the membrane. Its function is as follows. May be involved in the transport of nicotianamine-chelated metals. The chain is Probable metal-nicotianamine transporter YSL8 (YSL8) from Arabidopsis thaliana (Mouse-ear cress).